The sequence spans 253 residues: Succinate dehydrogenase iron-sulfur subunit (253 aa).

[2Fe-2S] cluster contacts are provided by C64, C69, and C84. In terms of domain architecture, 4Fe-4S ferredoxin-type spans 146-174; sequence RQWAYELSKCMTCGVCLEACPNVNSKSKF. The [4Fe-4S] cluster site is built by C155, C158, and C161. 3 residues coordinate [3Fe-4S] cluster: C165, C212, and C218. C222 is a [4Fe-4S] cluster binding site.

Belongs to the succinate dehydrogenase/fumarate reductase iron-sulfur protein family. In B.subtilis succinate dehydrogenase forms part of an enzyme complex containing three subunits: a flavoprotein, an iron-sulfur protein and cytochrome b-558. [2Fe-2S] cluster serves as cofactor. Requires [3Fe-4S] cluster as cofactor. The cofactor is [4Fe-4S] cluster.

The catalysed reaction is a quinone + succinate = fumarate + a quinol. It participates in carbohydrate metabolism; tricarboxylic acid cycle; fumarate from succinate (bacterial route): step 1/1. This chain is Succinate dehydrogenase iron-sulfur subunit (sdhB), found in Bacillus subtilis (strain 168).